A 322-amino-acid polypeptide reads, in one-letter code: Ras-like protein 2 (322 aa).

GTP is bound by residues 20–25 (GVGKSA), 36–42 (VDEYDPT), 66–67 (AG), and 123–126 (NKSD). An Effector region motif is present at residues 39-47 (YDPTIEDSY). Lys-131 is covalently cross-linked (Glycyl lysine isopeptide (Lys-Gly) (interchain with G-Cter in ubiquitin)). 153 to 155 (SAK) lines the GTP pocket. The tract at residues 178–322 (YNKTLTENDN…SGSGGCCIIS (145 aa)) is disordered. Positions 180–205 (KTLTENDNSKQTSQDTKGSGANSVPR) are enriched in polar residues. 6 positions are modified to phosphoserine: Ser-198, Ser-202, Ser-207, Ser-214, Ser-235, and Ser-238. A compositionally biased stretch (polar residues) spans 215–252 (NAANGKNVNSSTTVVNARNASIESKTGLAGNQATNGKT). The segment covering 261-284 (NSTGQAGQANAQSANTVNNRVNNN) has biased composition (low complexity). Positions 285–294 (SKAGQVSNAK) are enriched in polar residues. Cys-318 is lipidated: S-palmitoyl cysteine. Cys-319 carries the cysteine methyl ester modification. Residue Cys-319 is the site of S-farnesyl cysteine attachment. Positions 320-322 (IIS) are cleaved as a propeptide — removed in mature form.

Belongs to the small GTPase superfamily. Ras family. Post-translationally, farnesylated by RAM1-RAM2, which is required for targeting RAS2 to the cytoplasmic site of the endoplasmic reticulum, where proteolytic processing of the C-terminus by RCE1 and methylation of the resulting carboxyl group by STE14 occurs. In terms of processing, palmitoylated by the ERF2-SHR5 complex, which is required for proper plasma membrane localization of RAS2.

It localises to the cell membrane. It catalyses the reaction GTP + H2O = GDP + phosphate + H(+). Its activity is regulated as follows. Alternates between an inactive form bound to GDP and an active form bound to GTP. Activated by guanine nucleotide-exchange factor (GEF) CDC25 and inactivated by GTPase-activating proteins (GAPs) IRA1 and IRA2. Functionally, the S.cerevisiae Ras proteins modulate the activity of the adenylate cyclase catalytic subunit and therefore affect the biosynthesis of cyclic-AMP. The polypeptide is Ras-like protein 2 (RAS2) (Saccharomyces cerevisiae (strain ATCC 204508 / S288c) (Baker's yeast)).